A 79-amino-acid chain; its full sequence is uncharacterized protein (79 aa).

This is an uncharacterized protein from Helicobacter pylori (strain ATCC 700392 / 26695) (Campylobacter pylori).